The following is a 464-amino-acid chain: UDP-N-acetylmuramoylalanine--D-glutamate ligase (464 aa).

112-118 lines the ATP pocket; it reads GTDGKTT.

This sequence belongs to the MurCDEF family.

Its subcellular location is the cytoplasm. It carries out the reaction UDP-N-acetyl-alpha-D-muramoyl-L-alanine + D-glutamate + ATP = UDP-N-acetyl-alpha-D-muramoyl-L-alanyl-D-glutamate + ADP + phosphate + H(+). It participates in cell wall biogenesis; peptidoglycan biosynthesis. Its function is as follows. Cell wall formation. Catalyzes the addition of glutamate to the nucleotide precursor UDP-N-acetylmuramoyl-L-alanine (UMA). This is UDP-N-acetylmuramoylalanine--D-glutamate ligase from Pelodictyon phaeoclathratiforme (strain DSM 5477 / BU-1).